The primary structure comprises 518 residues: 2-isopropylmalate synthase (518 aa).

One can recognise a Pyruvate carboxyltransferase domain in the interval 5-268; sequence IIIFDTTLRD…DTRINTQEIH (264 aa). 4 residues coordinate Mn(2+): aspartate 14, histidine 202, histidine 204, and asparagine 238. A regulatory domain region spans residues 393–518; it reads TLDVITSQCI…DLKLHKIAGV (126 aa).

This sequence belongs to the alpha-IPM synthase/homocitrate synthase family. LeuA type 1 subfamily. Homodimer. The cofactor is Mn(2+).

The protein localises to the cytoplasm. The enzyme catalyses 3-methyl-2-oxobutanoate + acetyl-CoA + H2O = (2S)-2-isopropylmalate + CoA + H(+). Its pathway is amino-acid biosynthesis; L-leucine biosynthesis; L-leucine from 3-methyl-2-oxobutanoate: step 1/4. Catalyzes the condensation of the acetyl group of acetyl-CoA with 3-methyl-2-oxobutanoate (2-ketoisovalerate) to form 3-carboxy-3-hydroxy-4-methylpentanoate (2-isopropylmalate). The protein is 2-isopropylmalate synthase of Pasteurella multocida (strain Pm70).